The primary structure comprises 307 residues: Myeloid-associated differentiation marker-like protein 2 (307 aa).

MARVEL domains lie at 17–154 (AVTS…ARPG) and 159–303 (YMAT…RIRF). 7 helical membrane-spanning segments follow: residues 53–73 (FCMA…ACEF), 90–110 (AFAM…PLYF), 129–149 (LAAS…VALT), 163–183 (VSGL…GALV), 198–218 (VAVY…SVMG), 232–252 (VVYT…WPVF), and 278–298 (LVVA…LAYS).

Belongs to the MAL family.

The protein resides in the membrane. This is Myeloid-associated differentiation marker-like protein 2 (Myadml2) from Rattus norvegicus (Rat).